A 316-amino-acid chain; its full sequence is Pantothenate kinase (316 aa).

An ATP-binding site is contributed by 99–106 (GSVAVGKS).

Belongs to the prokaryotic pantothenate kinase family.

The protein resides in the cytoplasm. It carries out the reaction (R)-pantothenate + ATP = (R)-4'-phosphopantothenate + ADP + H(+). Its pathway is cofactor biosynthesis; coenzyme A biosynthesis; CoA from (R)-pantothenate: step 1/5. The polypeptide is Pantothenate kinase (coaA) (Pasteurella multocida (strain Pm70)).